Consider the following 344-residue polypeptide: Putative NAD(P)H nitroreductase MT3217 (344 aa).

FMN contacts are provided by residues Gln40–Trp44 and Arg326.

This sequence belongs to the nitroreductase family. As to quaternary structure, interacts with human TLR2. FMN is required as a cofactor.

Functionally, stimulates pro-inflammatory cytokine expression via TLR2 signaling pathway. Activation of TLR2 results in the phosphorylation and activation of NF-kappa-B. Also induces TLR2 expression. May influence the innate immune responses to facilitate the survival of M.tuberculosis in the granulomatous microenvironment. The protein is Putative NAD(P)H nitroreductase MT3217 of Mycobacterium tuberculosis (strain CDC 1551 / Oshkosh).